A 523-amino-acid polypeptide reads, in one-letter code: UvrABC system protein C (523 aa).

Residues 15-93 (HLPGCYLFKD…IKKHWPRYNI (79 aa)) form the GIY-YIG domain. The 36-residue stretch at 197–232 (RELIESMETEMKEMAAKQMFEQAMELRDEIAALEYL) folds into the UVR domain.

This sequence belongs to the UvrC family. As to quaternary structure, interacts with UvrB in an incision complex.

It localises to the cytoplasm. In terms of biological role, the UvrABC repair system catalyzes the recognition and processing of DNA lesions. UvrC both incises the 5' and 3' sides of the lesion. The N-terminal half is responsible for the 3' incision and the C-terminal half is responsible for the 5' incision. The protein is UvrABC system protein C of Methanosarcina mazei (strain ATCC BAA-159 / DSM 3647 / Goe1 / Go1 / JCM 11833 / OCM 88) (Methanosarcina frisia).